The following is a 329-amino-acid chain: uncharacterized protein (329 aa).

Residues 1-32 form the signal peptide; that stretch reads MSQDRGPRRPRRLEKCALISASATVLSLTASG. Cysteine 33 carries the N-palmitoyl cysteine lipid modification. Residue cysteine 33 is the site of S-diacylglycerol cysteine attachment.

The protein localises to the cell membrane. This is an uncharacterized protein from Streptomyces coelicolor (strain ATCC BAA-471 / A3(2) / M145).